The sequence spans 253 residues: uncharacterized protein (253 aa).

Residues 1–25 form the signal peptide; that stretch reads MRKKKFLSKVSFGSLFLLCGTVLSA. Residue Cys-26 is the site of N-palmitoyl cysteine attachment. Cys-26 is lipidated: S-diacylglycerol cysteine.

This sequence belongs to the MG439/MG440 family.

It localises to the cell membrane. This is an uncharacterized protein from Mycoplasma pneumoniae (strain ATCC 29342 / M129 / Subtype 1) (Mycoplasmoides pneumoniae).